A 576-amino-acid chain; its full sequence is DM7 family protein GD16138 (576 aa).

The tract at residues 454–481 (FPELEPDSEPEPEPEPQTEDEGEDEGDK) is disordered. Residues 457 to 478 (LEPDSEPEPEPEPQTEDEGEDE) show a composition bias toward acidic residues.

The protein belongs to the DM7 family.

This Drosophila simulans (Fruit fly) protein is DM7 family protein GD16138.